The following is a 69-amino-acid chain: Regulatory protein MokC (69 aa).

A helical membrane pass occupies residues 24 to 44 (KAMIVALIVICITAVVAALVT).

The protein belongs to the Hok/Gef family.

The protein resides in the cell inner membrane. In terms of biological role, might be the toxic component of a type I toxin-antitoxin (TA) system. Regulatory peptide which completely overlaps hokC and enables hokC expression. The polypeptide is Regulatory protein MokC (mokC) (Escherichia coli (strain K12)).